The primary structure comprises 142 residues: Large ribosomal subunit protein uL13c (142 aa).

The protein belongs to the universal ribosomal protein uL13 family. Part of the 50S ribosomal subunit.

It localises to the plastid. Its subcellular location is the chloroplast. The polypeptide is Large ribosomal subunit protein uL13c (Pyropia yezoensis (Susabi-nori)).